Here is a 159-residue protein sequence, read N- to C-terminus: Thioredoxin O2, mitochondrial (159 aa).

Ser-40 bears the Phosphoserine mark. The region spanning 43–159 is the Thioredoxin domain; it reads FAEGDRSSFV…LKSVMEQLYK (117 aa). Residues Cys-83 and Cys-86 each act as nucleophile in the active site. The cysteines at positions 83 and 86 are disulfide-linked.

The protein belongs to the thioredoxin family. Plant O-type subfamily.

The protein resides in the mitochondrion. Its function is as follows. Thiol-disulfide oxidoreductase that may participate in various redox reactions. Possesses insulin disulfide bonds reducing activity. Reduced by thioredoxin reductases NTRA and NTRB. The polypeptide is Thioredoxin O2, mitochondrial (Arabidopsis thaliana (Mouse-ear cress)).